The sequence spans 257 residues: 4-hydroxy-tetrahydrodipicolinate reductase (257 aa).

NAD(+)-binding positions include 11-16 and glutamate 37; that span reads GANGRM. Arginine 38 serves as a coordination point for NADP(+). NAD(+) contacts are provided by residues 86–88 and 110–113; these read GST and SGNY. Histidine 144 acts as the Proton donor/acceptor in catalysis. Residue histidine 145 coordinates (S)-2,3,4,5-tetrahydrodipicolinate. Residue lysine 148 is the Proton donor of the active site. 154 to 155 provides a ligand contact to (S)-2,3,4,5-tetrahydrodipicolinate; that stretch reads GT.

This sequence belongs to the DapB family.

The protein resides in the cytoplasm. The enzyme catalyses (S)-2,3,4,5-tetrahydrodipicolinate + NAD(+) + H2O = (2S,4S)-4-hydroxy-2,3,4,5-tetrahydrodipicolinate + NADH + H(+). It catalyses the reaction (S)-2,3,4,5-tetrahydrodipicolinate + NADP(+) + H2O = (2S,4S)-4-hydroxy-2,3,4,5-tetrahydrodipicolinate + NADPH + H(+). The protein operates within amino-acid biosynthesis; L-lysine biosynthesis via DAP pathway; (S)-tetrahydrodipicolinate from L-aspartate: step 4/4. In terms of biological role, catalyzes the conversion of 4-hydroxy-tetrahydrodipicolinate (HTPA) to tetrahydrodipicolinate. The polypeptide is 4-hydroxy-tetrahydrodipicolinate reductase (Caulobacter vibrioides (strain ATCC 19089 / CIP 103742 / CB 15) (Caulobacter crescentus)).